The following is a 395-amino-acid chain: MGIKHLYQVISENAPDAIKTGEIKNHFGRKVAIDASMSIYSFLIAVRSEGQQLMSESGETTSHLMGMFYRTLRMVDNGIKPLYVFDGAPPKLKSGELAKRVARKAEATEAHEEAKETGTAEDIEKFSRRTVRVTREHNAECKKLLELMGIPFINAPTEAEAQCAVLARAGKVYAAASEDMDTLCFESPILLRHLTFSEQRKEPIQEIHLDRALEGLDMDRAQFIDLCILLGCDYLEPIPKVGATTALSLIKEHKSLEKVLEFMKNDPKKKFVVPEDWPYEDARELFTNPDVRPADHPECDFKWEAPNVEGLIEFLVGDKGFNEDRVRNGAARLSKHLKTAQQSRLEGFFKPVARTEDEKASLKRKHDEKLQQQKKKKKEDAKAKKEAKAKPRGAA.

Positions 1 to 104 (MGIKHLYQVI…GELAKRVARK (104 aa)) are N-domain. D34 contributes to the Mg(2+) binding site. R47 and R70 together coordinate DNA. Positions 86, 158, 160, 179, and 181 each coordinate Mg(2+). The interval 122-253 (DIEKFSRRTV…TTALSLIKEH (132 aa)) is I-domain. E158 contacts DNA. G231 and D233 together coordinate DNA. Residue D233 coordinates Mg(2+). The interval 341–349 (QQSRLEGFF) is interaction with PCNA. The segment at 345–395 (LEGFFKPVARTEDEKASLKRKHDEKLQQQKKKKKEDAKAKKEAKAKPRGAA) is disordered. Basic and acidic residues-rich tracts occupy residues 353–371 (ARTEDEKASLKRKHDEKLQ) and 378–389 (KEDAKAKKEAKA).

It belongs to the XPG/RAD2 endonuclease family. FEN1 subfamily. As to quaternary structure, interacts with PCNA. Three molecules of fen1 bind to one PCNA trimer with each molecule binding to one PCNA monomer. PCNA stimulates the nuclease activity without altering cleavage specificity. The cofactor is Mg(2+). Post-translationally, phosphorylated. Phosphorylation upon DNA damage induces relocalization to the nuclear plasma.

The protein localises to the nucleus. It is found in the nucleolus. The protein resides in the nucleoplasm. Its subcellular location is the mitochondrion. Functionally, structure-specific nuclease with 5'-flap endonuclease and 5'-3' exonuclease activities involved in DNA replication and repair. During DNA replication, cleaves the 5'-overhanging flap structure that is generated by displacement synthesis when DNA polymerase encounters the 5'-end of a downstream Okazaki fragment. It enters the flap from the 5'-end and then tracks to cleave the flap base, leaving a nick for ligation. Also involved in the long patch base excision repair (LP-BER) pathway, by cleaving within the apurinic/apyrimidinic (AP) site-terminated flap. Acts as a genome stabilization factor that prevents flaps from equilibrating into structures that lead to duplications and deletions. Also possesses 5'-3' exonuclease activity on nicked or gapped double-stranded DNA, and exhibits RNase H activity. Also involved in replication and repair of rDNA and in repairing mitochondrial DNA. The polypeptide is Flap endonuclease 1 (fen1) (Penicillium rubens (strain ATCC 28089 / DSM 1075 / NRRL 1951 / Wisconsin 54-1255) (Penicillium chrysogenum)).